Here is a 430-residue protein sequence, read N- to C-terminus: tRNA(Ile)-lysidine synthase (430 aa).

21–26 contributes to the ATP binding site; it reads SGGLDS.

Belongs to the tRNA(Ile)-lysidine synthase family.

The protein resides in the cytoplasm. The catalysed reaction is cytidine(34) in tRNA(Ile2) + L-lysine + ATP = lysidine(34) in tRNA(Ile2) + AMP + diphosphate + H(+). Functionally, ligates lysine onto the cytidine present at position 34 of the AUA codon-specific tRNA(Ile) that contains the anticodon CAU, in an ATP-dependent manner. Cytidine is converted to lysidine, thus changing the amino acid specificity of the tRNA from methionine to isoleucine. This is tRNA(Ile)-lysidine synthase from Salmonella newport (strain SL254).